A 101-amino-acid polypeptide reads, in one-letter code: Small ribosomal subunit protein uS14A (101 aa).

Composition is skewed to basic and acidic residues over residues 28-44 and 61-70; these read KETIRRPSSSEDERAEA and RNRDAADGRP. The interval 28-74 is disordered; that stretch reads KETIRRPSSSEDERAEARAALQRLPRDASPVRLRNRDAADGRPRGHL.

Belongs to the universal ribosomal protein uS14 family. Part of the 30S ribosomal subunit. Contacts proteins S3 and S10.

Its function is as follows. Binds 16S rRNA, required for the assembly of 30S particles and may also be responsible for determining the conformation of the 16S rRNA at the A site. This Rhodococcus jostii (strain RHA1) protein is Small ribosomal subunit protein uS14A.